The chain runs to 428 residues: Adenosylhomocysteinase (428 aa).

Thr62, Asp134, and Glu159 together coordinate substrate. 160-162 lines the NAD(+) pocket; it reads TTT. 2 residues coordinate substrate: Lys189 and Asp193. NAD(+)-binding positions include Asn194, 223-228, Glu246, Asn281, 302-304, and Asn349; these read GYGWCG and SGH.

The protein belongs to the adenosylhomocysteinase family. NAD(+) serves as cofactor.

It localises to the cytoplasm. The enzyme catalyses S-adenosyl-L-homocysteine + H2O = L-homocysteine + adenosine. It functions in the pathway amino-acid biosynthesis; L-homocysteine biosynthesis; L-homocysteine from S-adenosyl-L-homocysteine: step 1/1. Its function is as follows. May play a key role in the regulation of the intracellular concentration of adenosylhomocysteine. In Gloeobacter violaceus (strain ATCC 29082 / PCC 7421), this protein is Adenosylhomocysteinase.